We begin with the raw amino-acid sequence, 111 residues long: Cytochrome c3, 26 kDa (111 aa).

His-30, His-33, Cys-38, Cys-41, His-42, His-43, Cys-54, Cys-59, His-60, His-77, Cys-86, Cys-89, His-90, Cys-105, Cys-108, and His-109 together coordinate heme c.

Homodimer. Requires heme c as cofactor.

The protein resides in the periplasm. Its function is as follows. Participates in sulfate respiration coupled with phosphorylation by transferring electrons from the enzyme dehydrogenase to ferredoxin. The polypeptide is Cytochrome c3, 26 kDa (Desulfomicrobium norvegicum (strain DSM 1741 / NCIMB 8310) (Desulfovibrio baculatus (strain Norway 4))).